The following is a 508-amino-acid chain: Maturase K (508 aa).

The protein belongs to the intron maturase 2 family. MatK subfamily.

It localises to the plastid. Its subcellular location is the chloroplast. Usually encoded in the trnK tRNA gene intron. Probably assists in splicing its own and other chloroplast group II introns. The protein is Maturase K of Stewartia pseudocamellia (Japanese stewartia).